The primary structure comprises 103 residues: uncharacterized protein (103 aa).

The signal sequence occupies residues 1–22 (MFRPFLNSLMLGSLFFPFIAIA).

This sequence to the N-terminal of the FimA/PapA family of fimbria proteins.

This is an uncharacterized protein from Escherichia coli (strain K12).